The sequence spans 134 residues: Replication enhancer protein (134 aa).

Belongs to the geminiviridae replication enhancer protein family. Homooligomer. Interacts with the replication-associated protein (REP). Interacts with host proliferating cell nuclear antigen (PCNA). Interacts with host retinoblastoma-related protein 1 (RBR1), and may thereby deregulate the host cell cycle. Oligomerization and interaction with PCNA are necessary for optimal replication enhancement.

Increases viral DNA accumulation. Enhances infectivity and symptom expression. In Squash leaf curl virus (SLCV), this protein is Replication enhancer protein.